Here is a 191-residue protein sequence, read N- to C-terminus: Penicillin-binding protein activator LpoB (191 aa).

The N-terminal stretch at 1–16 (MKRILFVILSTMLLAS) is a signal peptide. A lipid anchor (N-palmitoyl cysteine) is attached at Cys-17. A lipid anchor (S-diacylglycerol cysteine) is attached at Cys-17. The segment at 25–48 (QPAPVTPVEPKEKQETTPIEPSEK) is disordered.

The protein belongs to the LpoB family. In terms of assembly, interacts with PBP1b.

The protein localises to the cell outer membrane. In terms of biological role, regulator of peptidoglycan synthesis that is essential for the function of penicillin-binding protein 1B (PBP1b). The polypeptide is Penicillin-binding protein activator LpoB (Xenorhabdus nematophila (strain ATCC 19061 / DSM 3370 / CCUG 14189 / LMG 1036 / NCIMB 9965 / AN6)).